The primary structure comprises 545 residues: CTP synthase (545 aa).

The segment at 1-266 (MTTNYIFVTG…DDYICKRFSL (266 aa)) is amidoligase domain. Ser14 is a CTP binding site. Position 14 (Ser14) interacts with UTP. Residues 15–20 (SLGKGI) and Asp72 contribute to the ATP site. Mg(2+) contacts are provided by Asp72 and Glu140. Residues 147–149 (DIE), 187–192 (KTKPTQ), and Lys223 each bind CTP. UTP-binding positions include 187-192 (KTKPTQ) and Lys223. Residue 239–241 (KDV) participates in ATP binding. Residues 291–542 (NIGMVGKYVE…VKAASEYQKR (252 aa)) enclose the Glutamine amidotransferase type-1 domain. L-glutamine is bound at residue Gly352. Cys379 serves as the catalytic Nucleophile; for glutamine hydrolysis. L-glutamine contacts are provided by residues 380 to 383 (LGMQ), Glu403, and Arg470. Residues His515 and Glu517 contribute to the active site.

Belongs to the CTP synthase family. As to quaternary structure, homotetramer.

The catalysed reaction is UTP + L-glutamine + ATP + H2O = CTP + L-glutamate + ADP + phosphate + 2 H(+). The enzyme catalyses L-glutamine + H2O = L-glutamate + NH4(+). It catalyses the reaction UTP + NH4(+) + ATP = CTP + ADP + phosphate + 2 H(+). It participates in pyrimidine metabolism; CTP biosynthesis via de novo pathway; CTP from UDP: step 2/2. With respect to regulation, allosterically activated by GTP, when glutamine is the substrate; GTP has no effect on the reaction when ammonia is the substrate. The allosteric effector GTP functions by stabilizing the protein conformation that binds the tetrahedral intermediate(s) formed during glutamine hydrolysis. Inhibited by the product CTP, via allosteric rather than competitive inhibition. Functionally, catalyzes the ATP-dependent amination of UTP to CTP with either L-glutamine or ammonia as the source of nitrogen. Regulates intracellular CTP levels through interactions with the four ribonucleotide triphosphates. This Erwinia tasmaniensis (strain DSM 17950 / CFBP 7177 / CIP 109463 / NCPPB 4357 / Et1/99) protein is CTP synthase.